The primary structure comprises 298 residues: Bifunctional methyltransferase/endonuclease (298 aa).

Positions 1 to 79 (MQSIDLYSYL…SLGIDEKIRR (79 aa)) are probable methylated-DNA--protein-cysteine methyltransferase. Residue Cys-56 is part of the active site. An endonuclease V region spans residues 80 to 298 (LRNDGIEINN…TVALRRNNII (219 aa)). The Mg(2+) site is built by Asp-137 and Asp-197.

The protein in the N-terminal section; belongs to the MGMT family. In the C-terminal section; belongs to the endonuclease V family. Mg(2+) is required as a cofactor.

It is found in the cytoplasm. The enzyme catalyses Endonucleolytic cleavage at apurinic or apyrimidinic sites to products with a 5'-phosphate.. Functionally, DNA repair enzyme involved in the repair of deaminated bases. Selectively cleaves double-stranded DNA at the second phosphodiester bond 3' to a deoxyinosine leaving behind the intact lesion on the nicked DNA. In Picrophilus torridus (strain ATCC 700027 / DSM 9790 / JCM 10055 / NBRC 100828 / KAW 2/3), this protein is Bifunctional methyltransferase/endonuclease.